The chain runs to 392 residues: Multidrug resistance protein MdtL (392 aa).

Helical transmembrane passes span 4–24, 38–58, 70–90, 95–115, 131–151, 158–178, 209–229, 246–266, 270–290, 294–314, 331–351, and 357–377; these read FLLC…MYLV, AQLH…MLFA, VAIV…QAHA, LVGR…AFAI, LLNG…HLIM, SLFY…VFIL, ILIT…SPVL, ALMA…LSLF, TLML…SLAT, LTLI…GVAM, VLGI…AIIG, and MLIG…LVVT.

It belongs to the major facilitator superfamily. DHA1 family. MdtL (TC 2.A.1.2.22) subfamily.

It is found in the cell inner membrane. The chain is Multidrug resistance protein MdtL from Klebsiella pneumoniae (strain 342).